A 466-amino-acid chain; its full sequence is Neuropeptide Y receptor type 5 (466 aa).

The Extracellular segment spans residues 1 to 63 (MEVKLEEHFN…YRGSVDDLQY (63 aa)). N-linked (GlcNAc...) asparagine glycans are attached at residues Asn-10, Asn-17, Asn-38, and Asn-39. A helical membrane pass occupies residues 64–84 (FLIGLYTFVSLLGFMGNLLIL). The Cytoplasmic portion of the chain corresponds to 85 to 98 (MAVMKKRNQKTTVN). The helical transmembrane segment at 99-119 (FLIGNLAFSDILVVLFCSPFT) threads the bilayer. At 120–138 (LTSVLLDQWMFGKAMCHIM) the chain is on the extracellular side. The cysteines at positions 135 and 219 are disulfide-linked. Residues 139–159 (PFLQCVSVLVSTLILISIAIV) traverse the membrane as a helical segment. The Cytoplasmic portion of the chain corresponds to 160–177 (RYHMIKHPISNNLTANHG). A helical membrane pass occupies residues 178 to 198 (YFLIATVWTLGFAICSPLPVF). The Extracellular segment spans residues 199–229 (HSLVELKETFGSALLSSKYLCVESWPSDSYR). Residues 230–250 (IAFTISLLLVQYILPLVCLTV) traverse the membrane as a helical segment. The Cytoplasmic portion of the chain corresponds to 251-389 (SHTSVCRSIS…KKRSRSVFYR (139 aa)). The interval 323 to 346 (GPSQEKHLTVPENPGSVRSQLSPS) is disordered. A helical membrane pass occupies residues 390 to 410 (LTILILVFAVSWMPLHVFHVV). At 411 to 427 (TDFNDNLISNRHFKLVY) the chain is on the extracellular side. A helical membrane pass occupies residues 428 to 448 (CICHLLGMMSCCLNPILYGFL). At 449-466 (NNGIKADLRALIHCLHMS) the chain is on the cytoplasmic side. The S-palmitoyl cysteine moiety is linked to residue Cys-462.

The protein belongs to the G-protein coupled receptor 1 family.

Its subcellular location is the cell membrane. Functionally, receptor for neuropeptide Y and peptide YY. The activity of this receptor is mediated by G proteins that inhibit adenylate cyclase activity. Seems to be associated with food intake. Could be involved in feeding disorders. The protein is Neuropeptide Y receptor type 5 (Npy5r) of Mus musculus (Mouse).